Consider the following 701-residue polypeptide: Polyribonucleotide nucleotidyltransferase (701 aa).

Residues D483 and D489 each coordinate Mg(2+). One can recognise a KH domain in the interval 550-609 (PRIYTLHIPTDKIRDVIGPGGKVIRGIIEQTGVKIDVEDDGTIHVASADEASANKAIQII). The 68-residue stretch at 619 to 686 (GKTYLGKVVR…EGNKIKLSRK (68 aa)) folds into the S1 motif domain.

It belongs to the polyribonucleotide nucleotidyltransferase family. Mg(2+) is required as a cofactor.

The protein resides in the cytoplasm. The enzyme catalyses RNA(n+1) + phosphate = RNA(n) + a ribonucleoside 5'-diphosphate. Functionally, involved in mRNA degradation. Catalyzes the phosphorolysis of single-stranded polyribonucleotides processively in the 3'- to 5'-direction. The chain is Polyribonucleotide nucleotidyltransferase from Solibacter usitatus (strain Ellin6076).